We begin with the raw amino-acid sequence, 354 residues long: Homer protein homolog 1 (354 aa).

The WH1 domain maps to 1-110 (MGEQPIFSTR…EKFQEFKEAA (110 aa)). Gly2 is subject to N-acetylglycine. The disordered stretch occupies residues 114–172 (KEKSQEKMELTSTPSQESAGGDLQSPLTPESINGTDDERTPDLTQNSEPRPEPTQNALP). Polar residues-rich tracts occupy residues 138 to 147 (SPLTPESING) and 155 to 172 (DLTQNSEPRPEPTQNALP). The stretch at 181-352 (KHWEAELATL…LRDNLAKLLE (172 aa)) forms a coiled coil. Residues 290 to 354 (KLQEVEIRNK…DNLAKLLERS (65 aa)) form a required for tetramerization region. At Ser306 the chain carries Phosphoserine.

Belongs to the Homer family. Tetramer; this tetrameric structure is critical for forming the high-order complex with SHANK1, which in turn is necessary for the structural and functional integrity of dendritic spines. Interacts with GRM1, GRM5, ITPR1, DNM3, RYR1, RYR2 and SHANK3. Interacts with IFT57 and OPHN1. Encodes a coiled-coil structure that mediates homo- and heteromultimerization. Interacts with SHANK1; forms high-order polymerized complex with a mesh-like network structure, at least composed of SHANK1, HOMER1 and DLGAP1; the complex formation is SHANK1 multimerization dependent. Interacts with NFATC4. Interacts with DAGLA (via PPXXF motif); this interaction is required for the cell membrane localization of DAGLA. Interacts with SRGAP2.

The protein resides in the cytoplasm. It is found in the postsynaptic density. Its subcellular location is the synapse. The protein localises to the cell projection. It localises to the dendritic spine. Functionally, postsynaptic density scaffolding protein. Binds and cross-links cytoplasmic regions of GRM1, GRM5, ITPR1, DNM3, RYR1, RYR2, SHANK1 and SHANK3. By physically linking GRM1 and GRM5 with ER-associated ITPR1 receptors, it aids the coupling of surface receptors to intracellular calcium release. May also couple GRM1 to PI3 kinase through its interaction with AGAP2. Forms a high-order complex with SHANK1, which in turn is necessary for the structural and functional integrity of dendritic spines. Negatively regulates T cell activation by inhibiting the calcineurin-NFAT pathway. Acts by competing with calcineurin/PPP3CA for NFAT protein binding, hence preventing NFAT activation by PPP3CA. This Bos taurus (Bovine) protein is Homer protein homolog 1.